Reading from the N-terminus, the 571-residue chain is Adenine deaminase (571 aa).

The protein belongs to the metallo-dependent hydrolases superfamily. Adenine deaminase family. Requires Mn(2+) as cofactor.

It carries out the reaction adenine + H2O + H(+) = hypoxanthine + NH4(+). This Dehalococcoides mccartyi (strain CBDB1) protein is Adenine deaminase.